Reading from the N-terminus, the 105-residue chain is Ferredoxin--nitrite reductase, chloroplastic (105 aa).

Positions 28 and 32 each coordinate [4Fe-4S] cluster. Residue C32 coordinates siroheme.

Belongs to the nitrite and sulfite reductase 4Fe-4S domain family. Monomer. Siroheme is required as a cofactor. Requires [4Fe-4S] cluster as cofactor. In terms of tissue distribution, highest expression in roots and hypocotyls. Some expression in cotyledonary whorls.

Its subcellular location is the plastid. The protein localises to the chloroplast. It carries out the reaction 6 oxidized [2Fe-2S]-[ferredoxin] + NH4(+) + 2 H2O = nitrite + 6 reduced [2Fe-2S]-[ferredoxin] + 8 H(+). Its pathway is nitrogen metabolism; nitrate reduction (assimilation). The protein is Ferredoxin--nitrite reductase, chloroplastic (NIR) of Pinus sylvestris (Scotch pine).